Here is a 223-residue protein sequence, read N- to C-terminus: MQLTLTLSGSSMQLLLLVSNLLLWENMASKPTVLVSTEDLYHRLVEQSHNTFIKAADVYREFDINFAKRSWMKDRILPLCHTASIHVPENREEVHEIKTEDLLRSIINISVSWKEPLKHFVSAVTDLPGASASMRKKAVDMKDKNLIILEGLQKIFNRTQTKVEENENFDYPAWSGLKDLQSSDEDTHLFAIYNLCRCFKSDIHKIDTYLKVLRCRVVFKNEC.

A signal peptide spans 1-28 (MQLTLTLSGSSMQLLLLVSNLLLWENMA). Cystine bridges form between Cys80–Cys198 and Cys215–Cys223. 2 N-linked (GlcNAc...) asparagine glycosylation sites follow: Asn108 and Asn157.

The protein belongs to the somatotropin/prolactin family. Post-translationally, N-glycosylated.

It localises to the secreted. The chain is Prolactin-3D4 (Prl3d4) from Rattus norvegicus (Rat).